The sequence spans 623 residues: AM-toxin biosynthesis protein 12-2 (623 aa).

Residues 110–129 (TIPGTSQAKNTEPDHQASGL) are disordered.

It participates in mycotoxin biosynthesis. Its function is as follows. Part of the gene clusters that mediate the biosynthesis of AM-toxins, host-selective toxins (HSTs) causing Alternaria blotch on apple, a worldwide distributed disease. AM-toxins are cyclic depsipeptides containing the 3 residues 2-hydroxy-isovaleric acid (2-HIV), dehydroalanine, L-alanine which are common for all 3 AM-toxins I to III. The fourth precursor is L-alpha-amino-methoxyphenyl-valeric acid (L-Amv) for AM-toxin I, L-alpha-amino-phenyl-valeric acid (L-Apv) for AM-toxin II, and L-alpha-amino-hydroxyphenyl-valeric acid (L-Ahv) for AM-toxin III. AM-toxins have two target sites for affecting susceptible apple cells; they cause invagination of the plasma membrane and electrolyte loss and chloroplast disorganization. The non-ribosomal peptide synthetase AMT1 contains 4 catalytic modules and is responsible for activation of each residue in AM-toxin. The aldo-keto reductase AMT2 catalyzes the conversion of 2-keto-isovaleric acid (2-KIV) to 2-hydroxy-isovaleric acid (2-HIV), one of the precursor residues incorporated by AMT1 during AM-toxin biosynthesis, by reduction of its ketone to an alcohol. The cytochrome P450 monooxygenase AMT3 and the thioesterase AMT4 are also important for AM-toxin production, but their exact function within the AM-toxin biosynthesis are not known yet. Up to 21 proteins (including AMT1 to AMT4) are predicted to be involved in AM-toxin biosynthesis since their expression ishighly up-regulated in AM-toxin-producing cultures. The chain is AM-toxin biosynthesis protein 12-2 from Alternaria alternata (Alternaria rot fungus).